We begin with the raw amino-acid sequence, 247 residues long: Probable enoyl-CoA hydratase echA6 (247 aa).

It belongs to the enoyl-CoA hydratase/isomerase family.

It catalyses the reaction a (3S)-3-hydroxyacyl-CoA = a (2E)-enoyl-CoA + H2O. It carries out the reaction a 4-saturated-(3S)-3-hydroxyacyl-CoA = a (3E)-enoyl-CoA + H2O. Its function is as follows. Could possibly oxidize fatty acids using specific components. The polypeptide is Probable enoyl-CoA hydratase echA6 (echA6) (Mycobacterium leprae (strain TN)).